We begin with the raw amino-acid sequence, 123 residues long: Large ribosomal subunit protein uL24 (123 aa).

A disordered region spans residues 100-123 (RRPDGSTYKAERSVRISRKTGKEI).

This sequence belongs to the universal ribosomal protein uL24 family. Part of the 50S ribosomal subunit.

Its function is as follows. One of two assembly initiator proteins, it binds directly to the 5'-end of the 23S rRNA, where it nucleates assembly of the 50S subunit. One of the proteins that surrounds the polypeptide exit tunnel on the outside of the subunit. The sequence is that of Large ribosomal subunit protein uL24 from Nocardioides sp. (strain ATCC BAA-499 / JS614).